The chain runs to 508 residues: MTEPTQTQPAVAADENQIIAERREKLRALREQGVAYPNDFRPTHHAADLQATFADSDKAALEANPVEVSVAGRMMLKRVMGKASFATVQDGSGQIQFFVTPNDVGAETYDAFKKWDLGDIVAARGVLFRTNKGELSVQCKELRLLSKALRPLPDKFHGLADQEMRYRQRYVDLIVTPETRDTFRARTRTIASIRKFMDNADFMEVETPMLHPIPGGAAAKPFVTHHNALDMQMFLRIAPELYLKRLIVGGFERVFEINRNFRNEGVSPRHNPEFTMMEFYAAYTDYRWLMDFTEQLIRQAAIDALGTATIQYQGRELDLAKPFHRLTITQAIQKYAPQYTDGQLSDDAFLRTELKRFGVDVSQPAFLNAGIGALQLALFEETAESQLWEPTYIIDYPVEVSPLARASDTTPGITERFELFMTGREIANGFSELNDPEDQAARFKKQVEQKDAGDEEAMFFDADYIRALEHGMPPTGGCGIGIDRLVMLLTDSPTIRDVLLFPHLRRED.

2 residues coordinate Mg(2+): Glu418 and Glu425.

This sequence belongs to the class-II aminoacyl-tRNA synthetase family. As to quaternary structure, homodimer. The cofactor is Mg(2+).

Its subcellular location is the cytoplasm. It carries out the reaction tRNA(Lys) + L-lysine + ATP = L-lysyl-tRNA(Lys) + AMP + diphosphate. This Burkholderia ambifaria (strain MC40-6) protein is Lysine--tRNA ligase.